We begin with the raw amino-acid sequence, 601 residues long: Elongation factor 4 (601 aa).

The tr-type G domain maps to 7-189 (RNIRNFSIIA…AIVHRIPPPK (183 aa)). Residues 19–24 (DHGKST) and 136–139 (NKID) contribute to the GTP site.

The protein belongs to the TRAFAC class translation factor GTPase superfamily. Classic translation factor GTPase family. LepA subfamily.

The protein localises to the cell inner membrane. It carries out the reaction GTP + H2O = GDP + phosphate + H(+). Functionally, required for accurate and efficient protein synthesis under certain stress conditions. May act as a fidelity factor of the translation reaction, by catalyzing a one-codon backward translocation of tRNAs on improperly translocated ribosomes. Back-translocation proceeds from a post-translocation (POST) complex to a pre-translocation (PRE) complex, thus giving elongation factor G a second chance to translocate the tRNAs correctly. Binds to ribosomes in a GTP-dependent manner. The protein is Elongation factor 4 of Xanthomonas campestris pv. campestris (strain 8004).